The primary structure comprises 96 residues: ATP synthase subunit c (96 aa).

The next 2 helical transmembrane spans lie at 24–44 (HVGAYIGAGMAMTAAAGVGVG) and 75–95 (AIAESSAIYGLIIAFILIFVA).

Belongs to the ATPase C chain family. As to quaternary structure, F-type ATPases have 2 components, F(1) - the catalytic core - and F(0) - the membrane proton channel. F(1) has five subunits: alpha(3), beta(3), gamma(1), delta(1), epsilon(1). F(0) has three main subunits: a(1), b(2) and c(10-14). The alpha and beta chains form an alternating ring which encloses part of the gamma chain. F(1) is attached to F(0) by a central stalk formed by the gamma and epsilon chains, while a peripheral stalk is formed by the delta and b chains.

Its subcellular location is the cell membrane. F(1)F(0) ATP synthase produces ATP from ADP in the presence of a proton or sodium gradient. F-type ATPases consist of two structural domains, F(1) containing the extramembraneous catalytic core and F(0) containing the membrane proton channel, linked together by a central stalk and a peripheral stalk. During catalysis, ATP synthesis in the catalytic domain of F(1) is coupled via a rotary mechanism of the central stalk subunits to proton translocation. In terms of biological role, key component of the F(0) channel; it plays a direct role in translocation across the membrane. A homomeric c-ring of between 10-14 subunits forms the central stalk rotor element with the F(1) delta and epsilon subunits. The sequence is that of ATP synthase subunit c from Mycoplasmoides gallisepticum (strain R(low / passage 15 / clone 2)) (Mycoplasma gallisepticum).